We begin with the raw amino-acid sequence, 364 residues long: Probable UDP-arabinopyranose mutase 1 (364 aa).

Positions 110 to 112 match the DXD motif motif; the sequence is DDD. Arg158 is a glycosylation site (N-linked (Glc...) arginine).

It belongs to the RGP family. As to quaternary structure, homopentamer or homohexamer. Mn(2+) is required as a cofactor. Mg(2+) serves as cofactor. Reversibly glycosylated by UDP-glucose, UDP-xylose and UDP-galactose.

Its subcellular location is the secreted. The protein resides in the cell wall. It is found in the cell junction. The protein localises to the plasmodesma. It localises to the golgi apparatus. The catalysed reaction is UDP-beta-L-arabinofuranose = UDP-beta-L-arabinopyranose. In terms of biological role, probable UDP-L-arabinose mutase involved in the biosynthesis of cell wall non-cellulosic polysaccharides. Was initially shown to possess an autoglycosylating activity which is dependent on the presence of UDP-glucose and manganese. In Zea mays (Maize), this protein is Probable UDP-arabinopyranose mutase 1.